Here is a 395-residue protein sequence, read N- to C-terminus: Mitogen-activated protein kinase 6 (395 aa).

The disordered stretch occupies residues 1–35; the sequence is MDGGSGQPAADTEMTEAPGGFPAAAPSPQMPGIEN. A compositionally biased stretch (low complexity) spans 17–27; it reads APGGFPAAAPS. In terms of domain architecture, Protein kinase spans 63–348; sequence KPPIMPIGKG…VLDALAHPYL (286 aa). ATP is bound by residues 69–77 and K92; that span reads IGKGAYGIV. D189 (proton acceptor) is an active-site residue. Position 221 is a phosphothreonine (T221). A TXY motif is present at residues 221–223; sequence TEY. Y223 carries the phosphotyrosine modification. At T226 the chain carries Phosphothreonine.

Belongs to the protein kinase superfamily. CMGC Ser/Thr protein kinase family. MAP kinase subfamily. In terms of assembly, interacts with MEKK1, MKK1 and MKK2. May form a ternary complex with MEKK1 and MKK1 or MKK2. Interacts with NDPK2, AP2C1, MKP1 and PTP1. Interacts with DSPTP1B/MKP2, especially during HR-like responses triggered by fungal elicitors. Interacts with MKK4, MKK5 and MKK6. Binds to LIP5. Interacts with VQ4 and IKU1/VQ14. Interacts with RACK1A, RACK1B and RACK1C. Interacts with PTP1. Interacts with FLZ9. Binds to BASL and YDA. In terms of processing, dually phosphorylated on Thr-221 and Tyr-223, which activates the enzyme. Dephosphorylated by DSPTP1B/MKP2.

It is found in the cytoplasm. Its subcellular location is the nucleus. The protein localises to the cell cortex. The catalysed reaction is L-seryl-[protein] + ATP = O-phospho-L-seryl-[protein] + ADP + H(+). It catalyses the reaction L-threonyl-[protein] + ATP = O-phospho-L-threonyl-[protein] + ADP + H(+). Activated by threonine and tyrosine phosphorylation. Activated by the MAP kinase kinases MKK2, MKK3, MKK4, MKK5, MKK7 and MKK9. Activated in response to touch, wounding, low temperature, low humidity, salt stress, hydrogen peroxide, ozone, ACC (an ethylene precursor), jasmonic acid (JA), mastoparan and UVC. Activated in response to elicitors: oligogalacturonides, hexameric chitin fragments, fungal xylanase, and the bacterial flagellin and harpin. Activated upon Pseudomonas syringae pv. tomato DC3000 infection. Repressed by the protein phosphatase 2C AP2C1 and the protein-tyrosine-phosphatases MKP1 and PTP1. Repressed by DSPTP1B/MKP2-mediated dephosphorylation. Activated by polarized BASL. Triggered by MKKK20 in response to various abiotic stresses, including osmotic stress, cold and reactive oxygen species (ROS). Activated by MKK5 in response to abscisic acid (ABA). Functionally, mitogen-activated protein kinase (MAPK) which regulates abscisic acid (ABA) responses in a MAPKKK20-MKK5-MPK6 cascade involved in root growth (e.g. root cell division and elongation) and stomatal response. Involved in oxidative stress-mediated signaling cascade (such as ozone). Involved in the innate immune MAP kinase signaling cascade (MEKK1, MKK4/MKK5 and MPK3/MPK6) downstream of bacterial flagellin receptor FLS2. May be involved in hypersensitive response (HR)-mediated signaling cascade by modulating LIP5 phosphorylation and subsequent multivesicular bodies (MVBs) trafficking. May phosphorylate regulators of WRKY transcription factors. Phosphorylates 1-aminocyclopropane-1-carboxylic acid synthases (ACS2 and ACS6) and may be involved in the regulation of bacterial elicitor flagellin-induced ethylene production. Regulates locally gene-mediated and basal resistance response to certain pathogens. May be involved in the cold and salinity stress-mediated MAP kinase signaling cascade (MEKK1, MKK1/MKK2 and MPK4/MPK6). MKK1-MPK6 module mediates abscisic acid (ABA)-dependent CAT1 expression with H(2)O(2) production and response to drought and salt stress. MKK1-MPK6 module is also involved in sugar signaling during the process of seed germination. MKK3-MPK6 module plays an important role in the jasmonate signal transduction pathway through the negative regulation of MYC2/JIN1 expression. MKK9-MPK3/MPK6 module phosphorylates and activates EIN3, leading to the promotion of EIN3-mediated transcription in ethylene signaling. MPK3/MPK6 cascade regulates camalexin synthesis through transcriptional regulation of the biosynthetic genes after pathogen infection. MKK9-MPK6 module positively regulates leaf senescence. YDA-MKK4/MKK5-MPK3/MPK6 module regulates stomatal cell fate before the guard mother cell (GMC) is specified. When activated, reinforces the feedback loop by phosphorylating BASL, and inhibits stomatal fate by phosphorylating SPCH. This MAPK cascade also functions downstream of the ER receptor in regulating coordinated local cell proliferation, which shapes the morphology of plant organs. The chain is Mitogen-activated protein kinase 6 from Arabidopsis thaliana (Mouse-ear cress).